Reading from the N-terminus, the 420-residue chain is Isocitrate dehydrogenase [NADP] (420 aa).

Residues 75 to 77 and R82 contribute to the NADP(+) site; that span reads TIT. T77 serves as a coordination point for substrate. Substrate-binding positions include 94–100, R109, and R132; that span reads SPNGTIR. D252 is a binding site for Mn(2+). K260 contributes to the NADP(+) binding site. A Mn(2+)-binding site is contributed by D275. NADP(+) contacts are provided by residues 310 to 315 and N328; that span reads GTVTRH.

This sequence belongs to the isocitrate and isopropylmalate dehydrogenases family. Mg(2+) is required as a cofactor. Requires Mn(2+) as cofactor.

It carries out the reaction D-threo-isocitrate + NADP(+) = 2-oxoglutarate + CO2 + NADPH. Its function is as follows. May function in the production of NADPH for fatty acid and sterol synthesis. This Saccharomyces cerevisiae (strain ATCC 204508 / S288c) (Baker's yeast) protein is Isocitrate dehydrogenase [NADP] (IDP3).